We begin with the raw amino-acid sequence, 1028 residues long: Contactin-6 (1028 aa).

Residues 1–19 (MRLLWKLVILLPLINSCAG) form the signal peptide. Ig-like C2-type domains are found at residues 32 to 117 (PQDV…AKLQ), 122 to 208 (EDFE…RSVQ), 227 to 308 (PKIE…RNLA), 318 to 402 (PEWE…AELR), 408 to 495 (PDFS…GSLI), and 499 to 587 (RTVI…ERLS). Disulfide bonds link Cys-50/Cys-100, Cys-144/Cys-196, Cys-249/Cys-297, Cys-339/Cys-386, Cys-431/Cys-479, and Cys-521/Cys-577. N-linked (GlcNAc...) asparagine glycans are attached at residues Asn-65 and Asn-193. 3 N-linked (GlcNAc...) asparagine glycosylation sites follow: Asn-368, Asn-377, and Asn-468. Fibronectin type-III domains lie at 600–698 (PPED…TKAS), 703–800 (APVN…SGED), 805–901 (APRG…TKKS), and 902–996 (PPSQ…KMSS). N-linked (GlcNAc...) asparagine glycosylation is found at Asn-659, Asn-765, Asn-860, and Asn-865. The residue at position 882 (Tyr-882) is a Phosphotyrosine. A compositionally biased stretch (polar residues) spans 887-902 (TGPSSPPVNVTTKKSP). Residues 887-908 (TGPSSPPVNVTTKKSPPSQPPA) form a disordered region. Residues Asn-895, Asn-931, Asn-956, and Asn-957 are each glycosylated (N-linked (GlcNAc...) asparagine). Residue Ser-999 is the site of GPI-anchor amidated serine attachment. Positions 1000-1028 (VGVQILKPSTQFLTMVGFFYCFVIQPLSR) are cleaved as a propeptide — removed in mature form.

The protein belongs to the immunoglobulin superfamily. Contactin family. In terms of assembly, interacts with PTPRG. Specifically expressed in neuronal cells. In brain, it is expressed in spinal cord, cerebrum and cerebellum. At 17 dpc, it is expressed in hippocampus, cerebellum, and the brain stem. Strongly expressed after birth with a maximum level between P1 and P21, which corresponds to the time frame of oligodendrogliogenesis.

The protein resides in the cell membrane. Functionally, contactins mediate cell surface interactions during nervous system development. Participates in oligodendrocytes generation by acting as a ligand of NOTCH1. Its association with NOTCH1 promotes NOTCH1 activation through the released notch intracellular domain (NICD) and subsequent translocation to the nucleus. May be involved in motor coordination. The chain is Contactin-6 (Cntn6) from Rattus norvegicus (Rat).